The chain runs to 96 residues: Citrate lyase acyl carrier protein (96 aa).

Ser-14 bears the O-(phosphoribosyl dephospho-coenzyme A)serine mark.

It belongs to the CitD family. As to quaternary structure, oligomer with a subunit composition of (alpha,beta,gamma)6.

The protein localises to the cytoplasm. Functionally, covalent carrier of the coenzyme of citrate lyase. The chain is Citrate lyase acyl carrier protein from Pectobacterium atrosepticum (strain SCRI 1043 / ATCC BAA-672) (Erwinia carotovora subsp. atroseptica).